We begin with the raw amino-acid sequence, 177 residues long: DELTA-stichotoxin-Hmg2b (177 aa).

Positions 3–12 are plays an important role in the hemolytic activity; it reads ALAGTIIAGA. The N-terminal region stretch occupies residues 11–30; that stretch reads GASLGFQILDKVLGELGKVS. 7 residues coordinate phosphocholine: S54, V87, S105, P107, Y133, Y137, and Y138.

This sequence belongs to the actinoporin family. Sea anemone subfamily. In terms of assembly, octamer or nonamer in membranes. Monomer in the soluble state.

The protein localises to the secreted. The protein resides in the nematocyst. Its subcellular location is the target cell membrane. Functionally, pore-forming protein that forms cations-selective hydrophilic pores of around 1 nm and causes cytolysis. Pore formation is a multi-step process that involves specific recognition of membrane sphingomyelin (but neither cholesterol nor phosphatidylcholine) using aromatic rich region and adjacent phosphocholine (POC) binding site, firm binding to the membrane (mainly driven by hydrophobic interactions) accompanied by the transfer of the N-terminal region to the lipid-water interface and finally pore formation after oligomerization of monomers This toxin shows hemolytic activity. The sequence is that of DELTA-stichotoxin-Hmg2b from Heteractis magnifica (Magnificent sea anemone).